Reading from the N-terminus, the 122-residue chain is Urease subunit beta (122 aa).

The protein belongs to the urease beta subunit family. Heterotrimer of UreA (gamma), UreB (beta) and UreC (alpha) subunits. Three heterotrimers associate to form the active enzyme.

It is found in the cytoplasm. The catalysed reaction is urea + 2 H2O + H(+) = hydrogencarbonate + 2 NH4(+). The protein operates within nitrogen metabolism; urea degradation; CO(2) and NH(3) from urea (urease route): step 1/1. This chain is Urease subunit beta, found in Lysinibacillus sphaericus (strain C3-41).